Here is a 428-residue protein sequence, read N- to C-terminus: 26S proteasome regulatory subunit 7 (428 aa).

Residue 211 to 218 (GPPGTGKT) coordinates ATP.

It belongs to the AAA ATPase family.

It localises to the cytoplasm. The protein resides in the nucleus. Functionally, the 26S proteasome is involved in the ATP-dependent degradation of ubiquitinated proteins. The regulatory (or ATPase) complex confers ATP dependency and substrate specificity to the 26S complex. This Dictyostelium discoideum (Social amoeba) protein is 26S proteasome regulatory subunit 7 (psmC2).